The following is a 613-amino-acid chain: Probable inactive purple acid phosphatase 1 (613 aa).

A signal peptide spans Met1–Ser24. Asn89 and Asn116 each carry an N-linked (GlcNAc...) asparagine glycan. Asp295 serves as a coordination point for Fe cation. N-linked (GlcNAc...) asparagine glycosylation is present at Asn316. Fe cation-binding residues include Asp336 and Tyr339. Asp336 provides a ligand contact to Zn(2+). Asn369, His458, and His500 together coordinate Zn(2+). Residue Asn369 coordinates substrate. A substrate-binding site is contributed by His500–His502. His502 provides a ligand contact to Fe cation. N-linked (GlcNAc...) asparagine glycosylation is found at Asn528 and Asn551.

This sequence belongs to the metallophosphoesterase superfamily. Purple acid phosphatase family. As to quaternary structure, homodimer. Requires Fe cation as cofactor. Zn(2+) serves as cofactor. As to expression, expressed in roots, stems, leaves, flowers and siliques.

Its subcellular location is the secreted. This chain is Probable inactive purple acid phosphatase 1 (PAP1), found in Arabidopsis thaliana (Mouse-ear cress).